Consider the following 123-residue polypeptide: UPF0102 protein APP7_1414 (123 aa).

Belongs to the UPF0102 family.

The protein is UPF0102 protein APP7_1414 of Actinobacillus pleuropneumoniae serotype 7 (strain AP76).